A 245-amino-acid chain; its full sequence is MAGVGIRSYACHRQTRRLLDGDVLMSPGPGNTDMPQTKSSPIAHPYPGRLITLDGIDGVGKSSQIEILAERLRSEGRNVLCVRDPGSTDLGTKLRAMLLDSDLEMHRRTEAMLFMASRCEMIESTLRSALADGVTVISDRFLLANVVYQSVGGEVDAQTLWQLGRLACGGVQPDVTLLLDLPAEISMQRVGGEADRMESRGVDYMAKVRQAFLDELPNAGGRTHVIDASGTIEEVAETIAAIELF.

Gly55–Ser62 provides a ligand contact to ATP.

It belongs to the thymidylate kinase family.

It carries out the reaction dTMP + ATP = dTDP + ADP. Its function is as follows. Phosphorylation of dTMP to form dTDP in both de novo and salvage pathways of dTTP synthesis. The protein is Thymidylate kinase of Rhodopirellula baltica (strain DSM 10527 / NCIMB 13988 / SH1).